The following is a 448-amino-acid chain: Ribulose bisphosphate carboxylase large chain (448 aa).

Position 4 is an N6,N6,N6-trimethyllysine (K4). The substrate site is built by N113 and T163. The active-site Proton acceptor is the K165. K167 contributes to the substrate binding site. K191, D193, and E194 together coordinate Mg(2+). At K191 the chain carries N6-carboxylysine. Catalysis depends on H284, which acts as the Proton acceptor. 3 residues coordinate substrate: R285, H317, and S369.

Belongs to the RuBisCO large chain family. Type I subfamily. Heterohexadecamer of 8 large chains and 8 small chains; disulfide-linked. The disulfide link is formed within the large subunit homodimers. It depends on Mg(2+) as a cofactor. In terms of processing, the disulfide bond which can form in the large chain dimeric partners within the hexadecamer appears to be associated with oxidative stress and protein turnover.

The protein localises to the plastid. The protein resides in the chloroplast. It carries out the reaction 2 (2R)-3-phosphoglycerate + 2 H(+) = D-ribulose 1,5-bisphosphate + CO2 + H2O. The catalysed reaction is D-ribulose 1,5-bisphosphate + O2 = 2-phosphoglycolate + (2R)-3-phosphoglycerate + 2 H(+). Its function is as follows. RuBisCO catalyzes two reactions: the carboxylation of D-ribulose 1,5-bisphosphate, the primary event in carbon dioxide fixation, as well as the oxidative fragmentation of the pentose substrate in the photorespiration process. Both reactions occur simultaneously and in competition at the same active site. This Eucryphia lucida (Leatherwood) protein is Ribulose bisphosphate carboxylase large chain.